Reading from the N-terminus, the 236-residue chain is Flagellar L-ring protein (236 aa).

The first 16 residues, Met-1–Gly-16, serve as a signal peptide directing secretion. The N-palmitoyl cysteine moiety is linked to residue Cys-17. Cys-17 is lipidated: S-diacylglycerol cysteine.

Belongs to the FlgH family. The basal body constitutes a major portion of the flagellar organelle and consists of four rings (L,P,S, and M) mounted on a central rod.

It localises to the cell outer membrane. The protein localises to the bacterial flagellum basal body. Assembles around the rod to form the L-ring and probably protects the motor/basal body from shearing forces during rotation. The sequence is that of Flagellar L-ring protein from Sinorhizobium fredii (strain NBRC 101917 / NGR234).